The primary structure comprises 243 residues: rRNA adenine N-6-methyltransferase (243 aa).

6 residues coordinate S-adenosyl-L-methionine: asparagine 11, isoleucine 13, glycine 38, glutamate 59, aspartate 84, and asparagine 101.

Belongs to the class I-like SAM-binding methyltransferase superfamily. rRNA adenine N(6)-methyltransferase family.

The enzyme catalyses adenosine(2085) in 23S rRNA + 2 S-adenosyl-L-methionine = N(6)-dimethyladenosine(2085) in 23S rRNA + 2 S-adenosyl-L-homocysteine + 2 H(+). Its function is as follows. This protein produces a dimethylation of the adenine residue at position 2085 in 23S rRNA, resulting in reduced affinity between ribosomes and macrolide-lincosamide-streptogramin B antibiotics. This Staphylococcus aureus (strain Mu50 / ATCC 700699) protein is rRNA adenine N-6-methyltransferase (ermA1).